The chain runs to 311 residues: Malate dehydrogenase (311 aa).

Residues 7–13 (GAAGGIG) and Asp-34 contribute to the NAD(+) site. The substrate site is built by Arg-81 and Arg-87. NAD(+)-binding positions include Asn-94 and 117 to 119 (ITN). Asn-119 and Arg-153 together coordinate substrate. His-177 acts as the Proton acceptor in catalysis. Position 227 (Met-227) interacts with NAD(+).

This sequence belongs to the LDH/MDH superfamily. MDH type 1 family. As to quaternary structure, homodimer.

It carries out the reaction (S)-malate + NAD(+) = oxaloacetate + NADH + H(+). Catalyzes the reversible oxidation of malate to oxaloacetate. The chain is Malate dehydrogenase from Vibrio atlanticus (strain LGP32) (Vibrio splendidus (strain Mel32)).